An 884-amino-acid polypeptide reads, in one-letter code: Bifunctional heparan sulfate N-deacetylase/N-sulfotransferase 2 (884 aa).

Residues 1 to 18 (MLKLWKVVRPARQLELHR) are Cytoplasmic-facing. A helical; Signal-anchor for type II membrane protein membrane pass occupies residues 19–39 (LILLLIAFSLGSMGFLAYYVS). Residues 40-884 (TSPKAKEPLP…REELQHSSSG (845 aa)) lie on the Lumenal side of the membrane. The segment at 41-598 (SPKAKEPLPL…KRHKDIWSKE (558 aa)) is heparan sulfate N-deacetylase 2. A disordered region spans residues 49–82 (PLPLGDCSSSGAAGGPGPVRPPVPPRPPRPPETA). The segment covering 66–79 (PVRPPVPPRPPRPP) has biased composition (pro residues). 2 N-linked (GlcNAc...) asparagine glycosylation sites follow: N351 and N401. Residues 599–884 (KTCDRLPKFL…REELQHSSSG (286 aa)) form a heparan sulfate N-sulfotransferase 2 region. K614 acts as the For sulfotransferase activity in catalysis. 614-618 (KTGTT) provides a ligand contact to 3'-phosphoadenylyl sulfate. N-linked (GlcNAc...) asparagine glycosylation is present at N667. Residue S712 participates in 3'-phosphoadenylyl sulfate binding. N727 and N803 each carry an N-linked (GlcNAc...) asparagine glycan. A disulfide bridge connects residues C818 and C828. 3'-phosphoadenylyl sulfate is bound at residue 833 to 837 (KGRKY).

Belongs to the sulfotransferase 1 family. NDST subfamily. In terms of assembly, monomer.

The protein resides in the golgi apparatus membrane. The enzyme catalyses alpha-D-glucosaminyl-[heparan sulfate](n) + 3'-phosphoadenylyl sulfate = N-sulfo-alpha-D-glucosaminyl-[heparan sulfate](n) + adenosine 3',5'-bisphosphate + 2 H(+). It functions in the pathway glycan metabolism; heparan sulfate biosynthesis. The protein operates within glycan metabolism; heparin biosynthesis. Its function is as follows. Essential bifunctional enzyme that catalyzes both the N-deacetylation and the N-sulfation of glucosamine (GlcNAc) of the glycosaminoglycan in heparan sulfate. Modifies the GlcNAc-GlcA disaccharide repeating sugar backbone to make N-sulfated heparosan, a prerequisite substrate for later modifications in heparin biosynthesis. Plays a role in determining the extent and pattern of sulfation of heparan sulfate. Required for the exosomal release of SDCBP, CD63 and syndecan. This chain is Bifunctional heparan sulfate N-deacetylase/N-sulfotransferase 2 (NDST2), found in Bos taurus (Bovine).